Consider the following 289-residue polypeptide: MPELPEVEVVRRGLEEHLSDGVIHDVDVRHPRAVRAQPGGAAELVALLDGARIQSIERRGKYMWLVLNNGRALFVHLGMSGQMLIHEASDPALPTTHVRISARVDVGEKDLVLSFVDQRTFGQWQVTPVVADPHGGFTGVPVPVAHIAPDPFEAVFDPAVVARRLRAKKTDVKRAILDQTLVSGIGNIYADEALWAAGVAPSRRTRGMRQRDAVAVLEQAGAVMRRALAQGGTSFDSLYVNVNGASGYFARSLNAYGRAGKPCPRCGEPIVRVQWTNRSSHFCPQCQSS.

P2 serves as the catalytic Schiff-base intermediate with DNA. Catalysis depends on E3, which acts as the Proton donor. K61 acts as the Proton donor; for beta-elimination activity in catalysis. The DNA site is built by H97, R119, and K168. The segment at N254 to S288 adopts an FPG-type zinc-finger fold. Catalysis depends on R278, which acts as the Proton donor; for delta-elimination activity.

This sequence belongs to the FPG family. As to quaternary structure, monomer. The cofactor is Zn(2+).

The catalysed reaction is Hydrolysis of DNA containing ring-opened 7-methylguanine residues, releasing 2,6-diamino-4-hydroxy-5-(N-methyl)formamidopyrimidine.. The enzyme catalyses 2'-deoxyribonucleotide-(2'-deoxyribose 5'-phosphate)-2'-deoxyribonucleotide-DNA = a 3'-end 2'-deoxyribonucleotide-(2,3-dehydro-2,3-deoxyribose 5'-phosphate)-DNA + a 5'-end 5'-phospho-2'-deoxyribonucleoside-DNA + H(+). Functionally, involved in base excision repair of DNA damaged by oxidation or by mutagenic agents. Acts as a DNA glycosylase that recognizes and removes damaged bases. Has a preference for oxidized purines, such as 7,8-dihydro-8-oxoguanine (8-oxoG). Has AP (apurinic/apyrimidinic) lyase activity and introduces nicks in the DNA strand. Cleaves the DNA backbone by beta-delta elimination to generate a single-strand break at the site of the removed base with both 3'- and 5'-phosphates. This Corynebacterium urealyticum (strain ATCC 43042 / DSM 7109) protein is Formamidopyrimidine-DNA glycosylase.